We begin with the raw amino-acid sequence, 315 residues long: Rab effector Noc2 (315 aa).

The RabBD domain maps to 41–158 (QRRKQHLSPA…KRSGAWFYKG (118 aa)). The segment at 89-146 (GNGLSQCLLCGEVLGFLGSSSVFCKDCRKKVCTKCGIEASPGQKRPLWLCKICSEQRE) adopts an FYVE-type zinc-finger fold. Residues Cys95, Cys98, Cys112, Cys115, Cys120, Cys123, Cys138, and Cys141 each coordinate Zn(2+). A disordered region spans residues 170–315 (GRADDPHFRP…APAGPSSCLG (146 aa)). 2 stretches are compositionally biased toward basic and acidic residues: residues 184–193 (PAEREPRSSE) and 221–240 (LEDRLPSTGVRDRKGDKPWK). A compositionally biased stretch (polar residues) spans 262–275 (GCQSSLASGETGTG). Residues 298 to 315 (GRAPAADAAPAGPSSCLG) show a composition bias toward low complexity.

As to quaternary structure, recruited to dense-core vesicles through specific interaction with RAB27A in endocrine cells. Interacts with RAB3A, RAB3B, RAB3C and RAB3D. Interacts with ZYX. In terms of tissue distribution, moderate to high levels of expression in thyroid, ovary, stomach, heart, pancreas, skeletal muscle, kidney and liver. Also detected in epithelial cells.

It localises to the cytoplasm. The protein localises to the cytoplasmic vesicle. Its subcellular location is the secretory vesicle membrane. Rab GTPase effector involved in the late steps of regulated exocytosis, both in endocrine and exocrine cells. Acts as a potential RAB3B effector protein in epithelial cells. In Homo sapiens (Human), this protein is Rab effector Noc2 (RPH3AL).